A 650-amino-acid chain; its full sequence is Putative polypeptide N-acetylgalactosaminyltransferase 9 (650 aa).

At Met1–Thr11 the chain is on the cytoplasmic side. The chain crosses the membrane as a helical; Signal-anchor for type II membrane protein span at residues Ile12–Tyr31. Residues Thr32–Leu650 are Lumenal-facing. Positions Asn84–Arg154 are disordered. The segment covering His107–Ile136 has biased composition (basic and acidic residues). 5 disulfides stabilise this stretch: Cys198–Cys432, Cys423–Cys499, Cys535–Cys554, Cys577–Cys590, and Cys616–Cys631. Residues Leu208–Arg317 are catalytic subdomain A. 3 residues coordinate substrate: Cys216, Asp249, and Arg278. A Mn(2+)-binding site is contributed by Asp301. Ser302 and His303 together coordinate substrate. Residue His303 participates in Mn(2+) binding. 2 N-linked (GlcNAc...) asparagine glycosylation sites follow: Asn321 and Asn373. Positions Pro378 to Arg440 are catalytic subdomain B. His437 contacts Mn(2+). The substrate site is built by Arg440 and Tyr445. One can recognise a Ricin B-type lectin domain in the interval Ala521–Glu643.

The protein belongs to the glycosyltransferase 2 family. GalNAc-T subfamily. In terms of assembly, isoform A forms homotetramer. Isoform B forms homodimer. Mn(2+) serves as cofactor.

The protein resides in the golgi apparatus membrane. It carries out the reaction L-seryl-[protein] + UDP-N-acetyl-alpha-D-galactosamine = a 3-O-[N-acetyl-alpha-D-galactosaminyl]-L-seryl-[protein] + UDP + H(+). The catalysed reaction is L-threonyl-[protein] + UDP-N-acetyl-alpha-D-galactosamine = a 3-O-[N-acetyl-alpha-D-galactosaminyl]-L-threonyl-[protein] + UDP + H(+). The protein operates within protein modification; protein glycosylation. Functionally, catalyzes the initial reaction in O-linked oligosaccharide biosynthesis, the transfer of an N-acetyl-D-galactosamine residue to a serine or threonine residue on the protein receptor. It can both act as a peptide transferase that transfers GalNAc onto unmodified peptide substrates, and as a glycopeptide transferase that requires the prior addition of a GalNAc on a peptide before adding additional GalNAc moieties. N-acetylgalactosaminyltransferase which preferentially O-glycosylates negatively charge substrates. O-glycosylates mucin-like protein Sgs3 in the salivary gland but to a lesser extent than isoform B. By regulating the O-glycosylation of secretory cargo proteins plays a role in the morphology and maturation of salivary gland secretory granules. In terms of biological role, N-acetylgalactosaminyltransferase which preferentially O-glycosylates positively charge substrates. O-glycosylates mucin-like protein Sgs3 in the salivary gland. By regulating the O-glycosylation of secretory cargo proteins, plays a role in the morphology and maturation of salivary gland secretory granules. In Drosophila melanogaster (Fruit fly), this protein is Putative polypeptide N-acetylgalactosaminyltransferase 9.